The primary structure comprises 270 residues: Myelin protein zero-like protein 1 (270 aa).

The signal sequence occupies residues 1-35 (MAEAVGAVTLIAAPARRRWLWSALAAMLGLLTARI). The 116-residue stretch at 36–151 (SALEVHTPKE…DIVVRPGQIR (116 aa)) folds into the Ig-like V-type domain. Topologically, residues 36 to 162 (SALEVHTPKE…HVVEIDNLLV (127 aa)) are extracellular. Asn50 and Asn130 each carry an N-linked (GlcNAc...) asparagine glycan. Cys58 and Cys135 are joined by a disulfide. A helical transmembrane segment spans residues 163 to 183 (FLVWVVVGTVTAVVLGLTLLI). Residues 184-270 (SLVLVVLYRR…SVVYADIRKD (87 aa)) lie on the Cytoplasmic side of the membrane. Residues 201–257 (TGCSTSERLSPVKQAPRKCPSDTEGLVKSPPSAGSHQGPVIYAQLDHSGGHHSGKIN) form a disordered region. 4 positions are modified to phosphoserine: Ser204, Ser206, Ser210, and Ser221. The ITIM motif 1 signature appears at 240 to 245 (VIYAQL). Position 242 is a phosphotyrosine (Tyr242). Position 261 is a phosphoserine (Ser261). The short motif at 262-267 (VVYADI) is the ITIM motif 2 element. The residue at position 264 (Tyr264) is a Phosphotyrosine.

Belongs to the myelin P0 protein family. Interacts with phosphorylated PTPN11/SHP-2. In terms of processing, phosphorylated on tyrosine residues upon stimulation with pervanadate and concanavalin-A (ConA). Phosphorylation at Tyr-242 and Tyr-264 is required for interaction with PTPN11/SHP-2. Dephosphorylated by PTPN11/SHP-2 (in vitro). N-glycosylated.

It is found in the membrane. Its function is as follows. Cell surface receptor, which is involved in signal transduction processes. Recruits PTPN11/SHP-2 to the cell membrane and is a putative substrate of PTPN11/SHP-2. Is a major receptor for concanavalin-A (ConA) and is involved in cellular signaling induced by ConA, which probably includes Src family tyrosine-protein kinases. May be involved in regulation of integrin-mediated cell motility. This Rattus norvegicus (Rat) protein is Myelin protein zero-like protein 1 (Mpzl1).